The chain runs to 160 residues: Transcription elongation factor GreA (160 aa).

Residues 3–84 adopt a coiled-coil conformation; the sequence is SIVNDKILLT…SKAKIIKADL (82 aa).

Belongs to the GreA/GreB family.

In terms of biological role, necessary for efficient RNA polymerase transcription elongation past template-encoded arresting sites. The arresting sites in DNA have the property of trapping a certain fraction of elongating RNA polymerases that pass through, resulting in locked ternary complexes. Cleavage of the nascent transcript by cleavage factors such as GreA or GreB allows the resumption of elongation from the new 3'terminus. GreA releases sequences of 2 to 3 nucleotides. The chain is Transcription elongation factor GreA from Mesomycoplasma hyopneumoniae (strain 7448) (Mycoplasma hyopneumoniae).